The chain runs to 303 residues: Mitochondrial substrate carrier family protein E (303 aa).

Residues 1-8 (MENKKESS) lie on the Mitochondrial intermembrane side of the membrane. 3 Solcar repeats span residues 6–93 (ESSL…SKQW), 104–197 (ESTI…CKST), and 210–298 (LPIP…LKYL). The helical transmembrane segment at 9-29 (LLYILTGATSGLLADSIMHPV) threads the bilayer. At 30–67 (DTVRARVQIEKVGKSQYKGTFNALNQIIKNEGVSYLYK) the chain is on the mitochondrial matrix side. The helical transmembrane segment at 68–88 (GFPIVATATVPAHALYFLGYE) threads the bilayer. Over 89 to 109 (YSKQWVTDRYGKKWGESTITH) the chain is Mitochondrial intermembrane. The chain crosses the membrane as a helical span at residues 110 to 130 (FSAGFVADALGSLIWVPMDII). The Mitochondrial matrix segment spans residues 131–171 (KQRLQVQTNTQKLNPNQTYYKGSFHAGKIILQEEGIRGLYR). A helical membrane pass occupies residues 172–192 (GFMPALATYGPFVGIYFSVYE). The Mitochondrial intermembrane portion of the chain corresponds to 193–215 (KCKSTISSLLSKEKDQYLPIPYQ). Residues 216–236 (LGSGFFAGAFAAAVTCPLDVI) form a helical membrane-spanning segment. Residues 237 to 268 (KTRIQVQRSTEKQIYKGMWDSFKTILKEEGPK) lie on the Mitochondrial matrix side of the membrane. A helical transmembrane segment spans residues 269–289 (AFVKGMGARIWWIAPGNALTI). The Mitochondrial intermembrane segment spans residues 290–303 (ASYEQLKYLFKDLI).

It belongs to the mitochondrial carrier (TC 2.A.29) family.

The protein localises to the mitochondrion inner membrane. Mitochondrial solute carriers shuttle metabolites, nucleotides, and cofactors through the mitochondrial inner membrane. This chain is Mitochondrial substrate carrier family protein E (mcfE), found in Dictyostelium discoideum (Social amoeba).